The sequence spans 293 residues: Protease HtpX (293 aa).

The next 2 helical transmembrane spans lie at 4-24 (IALFLLTNLAVMVVFGLVLSL) and 32-52 (VTGLLIMALLFGFGGSIVSLL). H139 is a binding site for Zn(2+). E140 is a catalytic residue. H143 serves as a coordination point for Zn(2+). A run of 2 helical transmembrane segments spans residues 158–178 (VVNTFVIFISRIIAQVAAGFL) and 193–213 (LIYFAVATVLELVFGILASII). E222 is a Zn(2+) binding site.

This sequence belongs to the peptidase M48B family. Requires Zn(2+) as cofactor.

It is found in the cell inner membrane. In Cronobacter sakazakii (strain ATCC BAA-894) (Enterobacter sakazakii), this protein is Protease HtpX.